The primary structure comprises 243 residues: Leucyl/phenylalanyl-tRNA--protein transferase (243 aa).

The protein belongs to the L/F-transferase family.

It localises to the cytoplasm. The catalysed reaction is N-terminal L-lysyl-[protein] + L-leucyl-tRNA(Leu) = N-terminal L-leucyl-L-lysyl-[protein] + tRNA(Leu) + H(+). The enzyme catalyses N-terminal L-arginyl-[protein] + L-leucyl-tRNA(Leu) = N-terminal L-leucyl-L-arginyl-[protein] + tRNA(Leu) + H(+). It carries out the reaction L-phenylalanyl-tRNA(Phe) + an N-terminal L-alpha-aminoacyl-[protein] = an N-terminal L-phenylalanyl-L-alpha-aminoacyl-[protein] + tRNA(Phe). Its function is as follows. Functions in the N-end rule pathway of protein degradation where it conjugates Leu, Phe and, less efficiently, Met from aminoacyl-tRNAs to the N-termini of proteins containing an N-terminal arginine or lysine. The sequence is that of Leucyl/phenylalanyl-tRNA--protein transferase from Vibrio cholerae serotype O1 (strain ATCC 39541 / Classical Ogawa 395 / O395).